Here is a 398-residue protein sequence, read N- to C-terminus: Ribosomal RNA large subunit methyltransferase I (398 aa).

One can recognise a PUA domain in the interval 2-79; sequence SVRLVLAKGR…LSESIDIAFF (78 aa).

It belongs to the methyltransferase superfamily. RlmI family.

It localises to the cytoplasm. The catalysed reaction is cytidine(1962) in 23S rRNA + S-adenosyl-L-methionine = 5-methylcytidine(1962) in 23S rRNA + S-adenosyl-L-homocysteine + H(+). Functionally, specifically methylates the cytosine at position 1962 (m5C1962) of 23S rRNA. This is Ribosomal RNA large subunit methyltransferase I from Shigella dysenteriae serotype 1 (strain Sd197).